The primary structure comprises 213 residues: dITP/XTP pyrophosphatase (213 aa).

A substrate-binding site is contributed by 17–22 (SNNAGK). Residues E49 and D78 each coordinate Mg(2+). The active-site Proton acceptor is D78. Substrate is bound by residues S79, 164-167 (FGYD), K187, and 192-193 (HR).

The protein belongs to the HAM1 NTPase family. As to quaternary structure, homodimer. Mg(2+) is required as a cofactor.

It carries out the reaction XTP + H2O = XMP + diphosphate + H(+). The enzyme catalyses dITP + H2O = dIMP + diphosphate + H(+). The catalysed reaction is ITP + H2O = IMP + diphosphate + H(+). Functionally, pyrophosphatase that catalyzes the hydrolysis of nucleoside triphosphates to their monophosphate derivatives, with a high preference for the non-canonical purine nucleotides XTP (xanthosine triphosphate), dITP (deoxyinosine triphosphate) and ITP. Seems to function as a house-cleaning enzyme that removes non-canonical purine nucleotides from the nucleotide pool, thus preventing their incorporation into DNA/RNA and avoiding chromosomal lesions. The sequence is that of dITP/XTP pyrophosphatase from Bordetella bronchiseptica (strain ATCC BAA-588 / NCTC 13252 / RB50) (Alcaligenes bronchisepticus).